The sequence spans 489 residues: Aspartate/glutamate permease AcaP (489 aa).

12 helical membrane-spanning segments follow: residues 6–26 (IRWF…GNVV), 36–56 (VVTS…LIVG), 91–111 (VVHI…FGWV), 122–142 (MSMT…LWLS), 152–172 (IGGL…VMAI), 195–215 (IPKF…AVGG), 238–258 (FLLA…MGMI), 290–310 (LMIV…AFSI), 342–362 (GYTL…LGIG), 373–393 (NLNS…FIML), 413–433 (AMIA…LGMV), and 449–469 (LASN…LPFI).

The protein belongs to the amino acid-polyamine-organocation (APC) superfamily. Glutamate:GABA antiporter (GGA) (TC 2.A.3.7) family.

Its subcellular location is the cell membrane. In terms of biological role, involved in aspartate and glutamate uptake. Plays no significant role in the excretion of accumulated glutamate. The polypeptide is Aspartate/glutamate permease AcaP (Lactococcus lactis subsp. cremoris (strain MG1363)).